A 135-amino-acid chain; its full sequence is Small ribosomal subunit protein uS9 (135 aa).

A disordered region spans residues 96–135 (SADNRKPLKTEGHLSRDPRAKERRKYGLKKARKAPQFSKR). The segment covering 97 to 115 (ADNRKPLKTEGHLSRDPRA) has biased composition (basic and acidic residues). Positions 116–135 (KERRKYGLKKARKAPQFSKR) are enriched in basic residues.

The protein belongs to the universal ribosomal protein uS9 family.

This Prochlorococcus marinus (strain MIT 9303) protein is Small ribosomal subunit protein uS9.